The chain runs to 702 residues: Polyphosphate kinase (702 aa).

Position 55 (N55) interacts with ATP. R389 and R419 together coordinate Mg(2+). Residue H449 is the Phosphohistidine intermediate of the active site. Residues Y482, R578, and H606 each coordinate ATP.

The protein belongs to the polyphosphate kinase 1 (PPK1) family. Requires Mg(2+) as cofactor. An intermediate of this reaction is the autophosphorylated ppk in which a phosphate is covalently linked to a histidine residue through a N-P bond.

The enzyme catalyses [phosphate](n) + ATP = [phosphate](n+1) + ADP. In terms of biological role, catalyzes the reversible transfer of the terminal phosphate of ATP to form a long-chain polyphosphate (polyP). In Bacillus anthracis, this protein is Polyphosphate kinase.